A 1351-amino-acid chain; its full sequence is D-lysergyl-peptide-synthetase subunit 2 (1351 aa).

Residues 285–684 form an adenylation (A) domain region; sequence RCLSQPTASA…GRKDTQVKLR (400 aa). A Carrier domain is found at 828–904; the sequence is APQTTTEKLL…ALACVVRSGK (77 aa). Residue Ser-865 is modified to O-(pantetheine 4'-phosphoryl)serine. The segment at 941-1340 is condensation (C) domain; that stretch reads EDVYPCTPLQ…LIRDILAVPQ (400 aa).

This sequence belongs to the NRP synthetase family.

It functions in the pathway alkaloid biosynthesis; ergot alkaloid biosynthesis. In terms of biological role, D-lysergyl-peptide-synthetase subunit 2; part of the gene cluster that mediates the biosynthesis of fungal ergot alkaloid ergovaline, the predominant ergopeptine product in E.festucae var. lolii. DmaW catalyzes the first step of ergot alkaloid biosynthesis by condensing dimethylallyl diphosphate (DMAP) and tryptophan to form 4-dimethylallyl-L-tryptophan. The second step is catalyzed by the methyltransferase easF that methylates 4-dimethylallyl-L-tryptophan in the presence of S-adenosyl-L-methionine, resulting in the formation of 4-dimethylallyl-L-abrine. The catalase easC and the FAD-dependent oxidoreductase easE then transform 4-dimethylallyl-L-abrine to chanoclavine-I which is further oxidized by easD in the presence of NAD(+), resulting in the formation of chanoclavine-I aldehyde. Agroclavine dehydrogenase easG then mediates the conversion of chanoclavine-I aldehyde to agroclavine via a non-enzymatic adduct reaction: the substrate is an iminium intermediate that is formed spontaneously from chanoclavine-I aldehyde in the presence of glutathione. The presence of easA is not required to complete this reaction. Further conversion of agroclavine to paspalic acid is a two-step process involving oxidation of agroclavine to elymoclavine and of elymoclavine to paspalic acid, the second step being performed by the elymoclavine oxidase cloA. Paspalic acid is then further converted to D-lysergic acid. Ergovaline is assembled from D-lysergic acid and three different amino acids by the D-lysergyl-peptide-synthetase composed of a monomudular (lpsB) and a trimodular (lpsA) nonribosomal peptide synthetase subunit. The polypeptide is D-lysergyl-peptide-synthetase subunit 2 (Epichloe festucae var. lolii (Neotyphodium lolii)).